The sequence spans 563 residues: Membrane protein insertase YidC (563 aa).

A helical membrane pass occupies residues 6–26 (TVLWMIFSFSLLLLWNNWQIH). The segment at 36-70 (PAPEAAATQQPKADANGTAASSTASIPSSPAAAPA) is disordered. Residues 54–70 (AASSTASIPSSPAAAPA) show a composition bias toward low complexity. Helical transmembrane passes span 373–393 (WGWT…PLAA), 443–463 (LPMV…LASV), 482–502 (PFFI…KLNP), and 512–532 (VMMI…AGLV).

The protein belongs to the OXA1/ALB3/YidC family. Type 1 subfamily. As to quaternary structure, interacts with the Sec translocase complex via SecD. Specifically interacts with transmembrane segments of nascent integral membrane proteins during membrane integration.

It localises to the cell inner membrane. Functionally, required for the insertion and/or proper folding and/or complex formation of integral membrane proteins into the membrane. Involved in integration of membrane proteins that insert both dependently and independently of the Sec translocase complex, as well as at least some lipoproteins. Aids folding of multispanning membrane proteins. The polypeptide is Membrane protein insertase YidC (Bordetella parapertussis (strain 12822 / ATCC BAA-587 / NCTC 13253)).